The primary structure comprises 722 residues: MAR-binding filament-like protein 1-1 (722 aa).

The interval 1-20 (MGSSCFPQSPLSHSLFSSSS) is disordered. A chloroplast-targeting transit peptide spans 1-50 (MGSSCFPQSPLSHSLFSSSSLSSSQFTPLLFSPRNAQKCKKKMPAMACIH). Residues 51–84 (SENQKESEFCSRRTILFVGFSVLPLLSLRANAFE) constitute a thylakoid transit peptide. Over 85–112 (GLSVDSQVKAQPQKEETEQTIQGNAENP) the chain is Lumenal, thylakoid. A helical membrane pass occupies residues 113–133 (FFSLLNGLGVFGSGVLGSLYA). Topologically, residues 134 to 722 (LARNEKAVSD…TQPASQQESS (589 aa)) are stromal. Residues 146 to 679 (IESMKNKLKE…KGEILRLRTQ (534 aa)) adopt a coiled-coil conformation. Residues 687 to 722 (VNNEEKVEAGEKAAVTVKRTRRRKTATQPASQQESS) form a disordered region. The Nuclear localization signal signature appears at 705–712 (RTRRRKTA).

Interacts with PTST2; the interaction is essential for the initiation of starch granules biosynthesis in leaf chloroplasts, for the correct location of the process in the stromal spaces between the thylakoid membranes, and for the association of PTST2 with the thylakoid membranes. Post-translationally, predicted to be translocated into the thylakoid by the Tat system.

Its subcellular location is the plastid. The protein localises to the chloroplast. The protein resides in the chloroplast thylakoid membrane. It is found in the chloroplast stroma. It localises to the chloroplast nucleoid. Its subcellular location is the nucleus. The protein localises to the nucleus matrix. Functionally, required for the initiation of starch granules biosynthesis in leaf chloroplasts. Anchored to the thylakoid membranes with its C-terminus facing into the stroma where it is essential for localizing PTST2 and SS4 to the stromal spaces between the thylakoid membranes in order to begin starch granule formation. Associated with leaf chloroplastic nucleoids in vivo. Binds to various chloroplastic double-stranded DNA fragments without particular sequence specificity in vitro. May function at the interface between nucleoids and thylakoids possibly by anchoring nucleoids to the thylakoid membrane system in mature chloroplasts. Likely to participate in nuclear architecture by connecting chromatin with the nuclear matrix and potentially with the nuclear envelope. This Nicotiana tabacum (Common tobacco) protein is MAR-binding filament-like protein 1-1.